The primary structure comprises 694 residues: NADPH--cytochrome P450 reductase (694 aa).

At 1–8 (MAQLDTLD) the chain is on the lumenal side. A helical membrane pass occupies residues 9–31 (LVVLAVLLVGSVAYFTKGTYWAV). Residues 32 to 694 (AKDPYASTGP…RGRYQEDVWS (663 aa)) are Cytoplasmic-facing. One can recognise a Flavodoxin-like domain in the interval 66–220 (CVIFYGSQTG…DFLAWKEPMW (155 aa)). FMN-binding positions include 72–77 (SQTGTA), 123–126 (ATYG), 168–177 (LGNNTYEHYN), and Asp-203. In terms of domain architecture, FAD-binding FR-type spans 276–537 (HNPFIAPIAE…HVRHSNFKLP (262 aa)). Arg-295 serves as a coordination point for NADP(+). FAD-binding positions include 450–453 (RYYS), 468–470 (TAV), and 485–488 (GVTT). NADP(+) is bound by residues Thr-551, 613–614 (SR), 619–623 (KVYVQ), and Glu-655. Trp-693 contacts FAD.

Belongs to the NADPH--cytochrome P450 reductase family. The protein in the N-terminal section; belongs to the flavodoxin family. It in the C-terminal section; belongs to the flavoprotein pyridine nucleotide cytochrome reductase family. FAD is required as a cofactor. Requires FMN as cofactor.

It is found in the endoplasmic reticulum membrane. It localises to the mitochondrion outer membrane. The protein localises to the cell membrane. It catalyses the reaction 2 oxidized [cytochrome P450] + NADPH = 2 reduced [cytochrome P450] + NADP(+) + H(+). Functionally, this enzyme is required for electron transfer from NADP to cytochrome P450 in microsomes. It can also provide electron transfer to heme oxygenase and cytochrome B5. Involved in ergosterol biosynthesis. This is NADPH--cytochrome P450 reductase from Aspergillus niger.